The chain runs to 40 residues: Natriuretic peptide PpNP-a (40 aa).

The propeptide occupies 1–8; it reads SGSKTANI. The interval 1–40 is disordered; sequence SGSKTANIGDGCFGVPIDHIGSTSGMGCGSPRPKPTPGGS. C12 and C28 are oxidised to a cystine.

It belongs to the natriuretic peptide family. In terms of tissue distribution, expressed by the venom gland.

The protein resides in the secreted. In terms of biological role, snake venom natriuretic peptide that targets both NPR1 and NPR2. Exhibits hypotensive and vasodepressor activities. The polypeptide is Natriuretic peptide PpNP-a (Pseudechis porphyriacus (Red-bellied black snake)).